A 101-amino-acid chain; its full sequence is Large ribosomal subunit protein uL24 (101 aa).

The protein belongs to the universal ribosomal protein uL24 family. As to quaternary structure, part of the 50S ribosomal subunit.

One of two assembly initiator proteins, it binds directly to the 5'-end of the 23S rRNA, where it nucleates assembly of the 50S subunit. Its function is as follows. One of the proteins that surrounds the polypeptide exit tunnel on the outside of the subunit. This is Large ribosomal subunit protein uL24 from Ligilactobacillus salivarius (strain UCC118) (Lactobacillus salivarius).